Here is a 249-residue protein sequence, read N- to C-terminus: tRNA pseudouridine synthase A (249 aa).

D52 serves as the catalytic Nucleophile. Y110 is a binding site for substrate.

The protein belongs to the tRNA pseudouridine synthase TruA family. As to quaternary structure, homodimer.

The catalysed reaction is uridine(38/39/40) in tRNA = pseudouridine(38/39/40) in tRNA. In terms of biological role, formation of pseudouridine at positions 38, 39 and 40 in the anticodon stem and loop of transfer RNAs. In Syntrophomonas wolfei subsp. wolfei (strain DSM 2245B / Goettingen), this protein is tRNA pseudouridine synthase A.